Reading from the N-terminus, the 204-residue chain is Neurensin-2 (204 aa).

2 helical membrane passes run 66–86 (LSSGTLLLLLGVAALTTGYAV) and 122–142 (LCVAAGVLLAICLFWAMIGWL). The interval 178-204 (SGQSWFSPPASPFGQSSVQTIQPKRDS) is disordered. Residues 190-204 (FGQSSVQTIQPKRDS) show a composition bias toward polar residues.

The protein belongs to the VMP family.

It is found in the membrane. May play a role in maintenance and/or transport of vesicles. The chain is Neurensin-2 (NRSN2) from Homo sapiens (Human).